The following is a 149-amino-acid chain: Large ribosomal subunit protein bL9 (149 aa).

Belongs to the bacterial ribosomal protein bL9 family.

Binds to the 23S rRNA. The chain is Large ribosomal subunit protein bL9 from Cutibacterium acnes (strain DSM 16379 / KPA171202) (Propionibacterium acnes).